The primary structure comprises 139 residues: Protein AC53 (139 aa).

The protein localises to the host cytoplasm. Its subcellular location is the host nucleus. Plays a role in nucleocapsid assembly. In Lepidoptera (butterflies and moths), this protein is Protein AC53 (AC53).